Here is a 120-residue protein sequence, read N- to C-terminus: Large ribosomal subunit protein uL18 (120 aa).

This sequence belongs to the universal ribosomal protein uL18 family. As to quaternary structure, part of the 50S ribosomal subunit; part of the 5S rRNA/L5/L18/L25 subcomplex. Contacts the 5S and 23S rRNAs.

Functionally, this is one of the proteins that bind and probably mediate the attachment of the 5S RNA into the large ribosomal subunit, where it forms part of the central protuberance. This chain is Large ribosomal subunit protein uL18, found in Staphylococcus saprophyticus subsp. saprophyticus (strain ATCC 15305 / DSM 20229 / NCIMB 8711 / NCTC 7292 / S-41).